The sequence spans 217 residues: Segregation and condensation protein B (217 aa).

Belongs to the ScpB family. In terms of assembly, homodimer. Homodimerization may be required to stabilize the binding of ScpA to the Smc head domains. Component of a cohesin-like complex composed of ScpA, ScpB and the Smc homodimer, in which ScpA and ScpB bind to the head domain of Smc. The presence of the three proteins is required for the association of the complex with DNA.

The protein localises to the cytoplasm. In terms of biological role, participates in chromosomal partition during cell division. May act via the formation of a condensin-like complex containing Smc and ScpA that pull DNA away from mid-cell into both cell halves. In Geobacillus kaustophilus (strain HTA426), this protein is Segregation and condensation protein B.